The following is a 398-amino-acid chain: S-adenosylmethionine synthase (398 aa).

His-17 serves as a coordination point for ATP. Asp-19 is a Mg(2+) binding site. Glu-45 lines the K(+) pocket. Residues Glu-58 and Gln-101 each contribute to the L-methionine site. Residues 101–111 form a flexible loop region; the sequence is QSPDIAQGVDK. Residues 176 to 178, 243 to 244, Asp-252, 258 to 259, and Lys-279 contribute to the ATP site; these read DGK, RF, and RK. L-methionine is bound at residue Asp-252. An L-methionine-binding site is contributed by Lys-283.

This sequence belongs to the AdoMet synthase family. In terms of assembly, homotetramer; dimer of dimers. Requires Mg(2+) as cofactor. It depends on K(+) as a cofactor.

It is found in the cytoplasm. The enzyme catalyses L-methionine + ATP + H2O = S-adenosyl-L-methionine + phosphate + diphosphate. It participates in amino-acid biosynthesis; S-adenosyl-L-methionine biosynthesis; S-adenosyl-L-methionine from L-methionine: step 1/1. In terms of biological role, catalyzes the formation of S-adenosylmethionine (AdoMet) from methionine and ATP. The overall synthetic reaction is composed of two sequential steps, AdoMet formation and the subsequent tripolyphosphate hydrolysis which occurs prior to release of AdoMet from the enzyme. The sequence is that of S-adenosylmethionine synthase from Staphylococcus aureus (strain Mu3 / ATCC 700698).